The sequence spans 793 residues: DnaJ homolog subfamily C member 10 (793 aa).

An N-terminal signal peptide occupies residues 1-32; sequence MGVWLNKDDYIRDLKRIILCFLIVYMAILVGT. The J domain occupies 35–100; sequence DFYSLLGVSK…DLRKKYDKYG (66 aa). Positions 130-232 constitute a Thioredoxin 1 domain; it reads EIITLERREF…ESLVSFAMQH (103 aa). A disulfide bond links Cys-158 and Cys-161. Trxb stretches follow at residues 235 to 350 and 348 to 463; these read STVT…LPDF and PDFE…PQNF. Thioredoxin domains are found at residues 454 to 553, 557 to 662, and 671 to 778; these read HVTT…IEDL, SVVS…SLRI, and VSTD…ISEK. Cys-480 and Cys-483 are joined by a disulfide. N-linked (GlcNAc...) asparagine glycosylation occurs at Asn-530. 2 disulfides stabilise this stretch: Cys-588–Cys-591 and Cys-700–Cys-703. Residues 790–793 carry the Prevents secretion from ER motif; it reads KDEL.

In terms of assembly, interacts with EDEM1. Interacts with HSPA5 (via its J domain).

It localises to the endoplasmic reticulum lumen. In terms of biological role, endoplasmic reticulum disulfide reductase involved both in the correct folding of proteins and degradation of misfolded proteins. Required for efficient folding of proteins in the endoplasmic reticulum by catalyzing the removal of non-native disulfide bonds formed during the folding of proteins, such as LDLR. Also involved in endoplasmic reticulum-associated degradation (ERAD) by reducing incorrect disulfide bonds in misfolded glycoproteins recognized by EDEM1. Interaction with HSPA5 is required its activity, not for the disulfide reductase activity, but to facilitate the release of DNAJC10 from its substrate. Promotes apoptotic signaling pathway in response to endoplasmic reticulum stress. The chain is DnaJ homolog subfamily C member 10 (DNAJC10) from Homo sapiens (Human).